We begin with the raw amino-acid sequence, 83 residues long: MKVTLIAILTCAAVLVLHTTAAEELEESQLMEVGMPDTELAAVDEERLFECSISCEIEKKGESCKPKKCKGGWKCKFNMCVKV.

The first 21 residues, methionine 1 to alanine 21, serve as a signal peptide directing secretion. A propeptide spanning residues alanine 22 to leucine 48 is cleaved from the precursor. 3 disulfide bridges follow: cysteine 51–cysteine 64, cysteine 55–cysteine 75, and cysteine 69–cysteine 80.

The protein belongs to the neurotoxin 12 (Hwtx-2) family. 02 (Hwtx-2) subfamily. Expressed by the venom gland.

The protein localises to the secreted. Its function is as follows. Lethal neurotoxin that blocks neuromuscular transmission. The sequence is that of U1-theraphotoxin-Hs1f from Cyriopagopus schmidti (Chinese bird spider).